The primary structure comprises 92 residues: Phosphoribosyl-ATP pyrophosphatase (92 aa).

It belongs to the PRA-PH family.

The protein localises to the cytoplasm. It carries out the reaction 1-(5-phospho-beta-D-ribosyl)-ATP + H2O = 1-(5-phospho-beta-D-ribosyl)-5'-AMP + diphosphate + H(+). It functions in the pathway amino-acid biosynthesis; L-histidine biosynthesis; L-histidine from 5-phospho-alpha-D-ribose 1-diphosphate: step 2/9. The protein is Phosphoribosyl-ATP pyrophosphatase of Leptospira interrogans serogroup Icterohaemorrhagiae serovar copenhageni (strain Fiocruz L1-130).